The primary structure comprises 337 residues: Primase homolog protein (337 aa).

The region spanning 205-304 is the Toprim domain; the sequence is SEIIIVEGEP…WLVKWPKKSE (100 aa). Mg(2+)-binding residues include Glu211, Asp273, and Asp275.

Requires Mg(2+) as cofactor.

May act as a DNA primase. In Arabidopsis thaliana (Mouse-ear cress), this protein is Primase homolog protein.